A 194-amino-acid polypeptide reads, in one-letter code: Probable GTP-binding protein EngB (194 aa).

The 173-residue stretch at 22 to 194 (DLPEYALAGR…AWQFIKEGME (173 aa)) folds into the EngB-type G domain. GTP-binding positions include 30–37 (GRSNVGKS), 57–61 (GKTQT), 75–78 (DVPG), 142–145 (TKAD), and 174–176 (FSS). 2 residues coordinate Mg(2+): serine 37 and threonine 59.

The protein belongs to the TRAFAC class TrmE-Era-EngA-EngB-Septin-like GTPase superfamily. EngB GTPase family. The cofactor is Mg(2+).

In terms of biological role, necessary for normal cell division and for the maintenance of normal septation. This Listeria monocytogenes serotype 4b (strain CLIP80459) protein is Probable GTP-binding protein EngB.